The following is a 742-amino-acid chain: Glycine--tRNA ligase (742 aa).

Residues 73–129 form the WHEP-TRS domain; that stretch reads KLAPLRAAVKEYGDLIRDLKAKGAPKIDIDKAVVELKARKRLLEDTEIALAPKEASF. Glutamate 309 contacts glycine. ATP contacts are provided by residues 341–343 and 352–353; these read RNE and RV. Glutamate 360 contacts glycine. Position 467 to 468 (467 to 468) interacts with ATP; it reads EC. 586–588 contributes to the glycine binding site; the sequence is EPS. Residue arginine 593 coordinates ATP.

This sequence belongs to the class-II aminoacyl-tRNA synthetase family. Homodimer.

It is found in the cytoplasm. It localises to the cell projection. The protein localises to the axon. Its subcellular location is the secreted. The protein resides in the extracellular exosome. It carries out the reaction tRNA(Gly) + glycine + ATP = glycyl-tRNA(Gly) + AMP + diphosphate. The catalysed reaction is 2 ATP + H(+) = P(1),P(4)-bis(5'-adenosyl) tetraphosphate + diphosphate. Its function is as follows. Catalyzes the ATP-dependent ligation of glycine to the 3'-end of its cognate tRNA, via the formation of an aminoacyl-adenylate intermediate (Gly-AMP). Also produces diadenosine tetraphosphate (Ap4A), a universal pleiotropic signaling molecule needed for cell regulation pathways, by direct condensation of 2 ATPs. Thereby, may play a special role in Ap4A homeostasis. The sequence is that of Glycine--tRNA ligase from Caenorhabditis elegans.